The sequence spans 322 residues: Deoxyhypusine hydroxylase (322 aa).

4 residues coordinate Fe cation: H78, E79, H111, and E112. 4 HEAT-like PBS-type repeats span residues 109 to 135, 203 to 229, 234 to 260, and 267 to 293; these read VRHE…CLKN, LRYR…GFND, FKHE…VLGR, and VRHE…YLND. 4 residues coordinate Fe cation: H236, E237, H269, and E270.

The protein belongs to the deoxyhypusine hydroxylase family. The cofactor is Fe(2+).

It localises to the cytoplasm. Its subcellular location is the nucleus. It catalyses the reaction [eIF5A protein]-deoxyhypusine + AH2 + O2 = [eIF5A protein]-hypusine + A + H2O. It functions in the pathway protein modification; eIF5A hypusination. Its function is as follows. Catalyzes the hydroxylation of the N(6)-(4-aminobutyl)-L-lysine intermediate to form hypusine, an essential post-translational modification only found in mature eIF-5A factor. The sequence is that of Deoxyhypusine hydroxylase from Candida glabrata (strain ATCC 2001 / BCRC 20586 / JCM 3761 / NBRC 0622 / NRRL Y-65 / CBS 138) (Yeast).